The sequence spans 179 residues: Large ribosomal subunit protein uL5 (179 aa).

This sequence belongs to the universal ribosomal protein uL5 family. In terms of assembly, part of the 50S ribosomal subunit; part of the 5S rRNA/L5/L18/L25 subcomplex. Contacts the 5S rRNA and the P site tRNA. Forms a bridge to the 30S subunit in the 70S ribosome.

In terms of biological role, this is one of the proteins that bind and probably mediate the attachment of the 5S RNA into the large ribosomal subunit, where it forms part of the central protuberance. In the 70S ribosome it contacts protein S13 of the 30S subunit (bridge B1b), connecting the 2 subunits; this bridge is implicated in subunit movement. Contacts the P site tRNA; the 5S rRNA and some of its associated proteins might help stabilize positioning of ribosome-bound tRNAs. The polypeptide is Large ribosomal subunit protein uL5 (Francisella tularensis subsp. tularensis (strain SCHU S4 / Schu 4)).